Consider the following 1041-residue polypeptide: Sarcoplasmic/endoplasmic reticulum calcium ATPase 2 (1041 aa).

The Cytoplasmic portion of the chain corresponds to 1 to 48 (MENAHTKTVEEVLAYFGVNESTGLSLEQVKKLKEKWGSNELPAEEGKT). Residues 49–69 (LLELVIEQFEDLLVRILLLAA) form a helical membrane-spanning segment. Residues 70 to 89 (CISFVLAWFEEGEETITAFV) lie on the Lumenal side of the membrane. Residues 90–110 (EPFVILLILVANAIVGVWQER) form a helical membrane-spanning segment. The Cytoplasmic segment spans residues 111 to 253 (NAENAIEALK…QERTPLQQKL (143 aa)). A helical membrane pass occupies residues 254–273 (DEFGEQLSKVISLICIAVWI). Topologically, residues 274–295 (INIGHFNDPVHGGSWIRGAIYY) are lumenal. The chain crosses the membrane as a helical span at residues 296 to 313 (FKIAVALAVAAIPEGLPA). 4 residues coordinate Ca(2+): valine 304, alanine 305, isoleucine 307, and glutamate 309. Over 314 to 756 (VITTCLALGT…EEGRAIYNNM (443 aa)) the chain is Cytoplasmic. Aspartate 351 functions as the 4-aspartylphosphate intermediate in the catalytic mechanism. Positions 351 and 353 each coordinate Mg(2+). Residues threonine 353, glutamate 442, arginine 489, lysine 514, arginine 559, threonine 624, glycine 625, aspartate 626, arginine 677, and lysine 683 each contribute to the ATP site. Mg(2+) is bound at residue aspartate 702. Asparagine 705 contacts ATP. Residues 757 to 776 (KQFIRYLISSNVGEVVCIFL) traverse the membrane as a helical segment. Positions 767 and 770 each coordinate Ca(2+). Over 777–786 (TAALGFPEAL) the chain is Lumenal. A helical membrane pass occupies residues 787–807 (IPVQLLWVNLVTDGLPATALG). Positions 787–807 (IPVQLLWVNLVTDGLPATALG) are interaction with PLN. 3 residues coordinate Ca(2+): asparagine 795, threonine 798, and aspartate 799. Residues 808–827 (FNPPDLDIMNKPPRNPKEPL) lie on the Cytoplasmic side of the membrane. A helical transmembrane segment spans residues 828-850 (ISGWLFFRYLAIGCYVGAATVGA). Residues 851 to 896 (AAWWFIAADGGPRVTFYQLSHFLQCKEDNPDFSGVDCVVFESPYPM) lie on the Lumenal side of the membrane. Cysteine 875 and cysteine 887 are disulfide-bonded. A helical transmembrane segment spans residues 897-916 (TMALSVLVTIEMCNALNSLS). Glutamate 907 lines the Ca(2+) pocket. Topologically, residues 917–929 (ENQSLMRMPPWEN) are cytoplasmic. A helical membrane pass occupies residues 930 to 948 (IWLVGAICLSMSLHFLILY). Residues 931–942 (WLVGAICLSMSL) are interaction with PLN. Residues 949–963 (VEPLPIIFQITPLNV) are Lumenal-facing. Residues 964–984 (TQWLMVLKISLPVILLDETLK) form a helical membrane-spanning segment. Residues 985–1041 (YVARNYLEPGKDSVQPATKPCSLSACTEGVSWPFVFITLPLVIWLYSTDTNFSDMFW) lie on the Cytoplasmic side of the membrane.

This sequence belongs to the cation transport ATPase (P-type) (TC 3.A.3) family. Type IIA subfamily. Interacts with sarcolipin (SLN). Interacts with phospholamban (PLN). Interacts with myoregulin (MRLN). Interacts with DWORF. Interacts with TMX2. Requires Mg(2+) as cofactor. As to expression, only isoform 2 is detected in heart, while both isoforms are expressed in brain, with isoform 2 being predominant.

It is found in the endoplasmic reticulum membrane. Its subcellular location is the sarcoplasmic reticulum membrane. The enzyme catalyses Ca(2+)(in) + ATP + H2O = Ca(2+)(out) + ADP + phosphate + H(+). Reversibly inhibited by phospholamban (PLN) at low calcium concentrations. Inhibited by sarcolipin (SLN) and myoregulin (MRLN). Enhanced by DWORF; DWORF increases activity by displacing sarcolipin (SLN), phospholamban (PLN) and myoregulin (MRLN). In terms of biological role, this magnesium-dependent enzyme catalyzes the hydrolysis of ATP coupled with the translocation of calcium from the cytosol to the sarcoplasmic reticulum lumen. Isoform SERCA2A is involved in the regulation of the contraction/relaxation cycle. May act as a regulator of TNFSF11-mediated Ca(2+) signaling during osteoclastogenesis. This Gallus gallus (Chicken) protein is Sarcoplasmic/endoplasmic reticulum calcium ATPase 2 (ATP2A2).